The chain runs to 123 residues: Large ribosomal subunit protein uL18 (123 aa).

Belongs to the universal ribosomal protein uL18 family. As to quaternary structure, part of the 50S ribosomal subunit; part of the 5S rRNA/L5/L18/L25 subcomplex. Contacts the 5S and 23S rRNAs.

This is one of the proteins that bind and probably mediate the attachment of the 5S RNA into the large ribosomal subunit, where it forms part of the central protuberance. This Bifidobacterium longum (strain DJO10A) protein is Large ribosomal subunit protein uL18.